The following is a 948-amino-acid chain: Alanine--tRNA ligase (948 aa).

H638, H642, C739, and H743 together coordinate Zn(2+).

This sequence belongs to the class-II aminoacyl-tRNA synthetase family. The cofactor is Zn(2+).

Its subcellular location is the cytoplasm. The enzyme catalyses tRNA(Ala) + L-alanine + ATP = L-alanyl-tRNA(Ala) + AMP + diphosphate. In terms of biological role, catalyzes the attachment of alanine to tRNA(Ala) in a two-step reaction: alanine is first activated by ATP to form Ala-AMP and then transferred to the acceptor end of tRNA(Ala). Also edits incorrectly charged Ser-tRNA(Ala) and Gly-tRNA(Ala) via its editing domain. The chain is Alanine--tRNA ligase from Paracidovorax citrulli (strain AAC00-1) (Acidovorax citrulli).